The sequence spans 382 residues: Regulatory protein RapC (382 aa).

TPR repeat units follow at residues 102-138 (YYVNFFRGMYEFDKREFISAITYYKQAEKKLSFVADH), 149-182 (AEAYYYMKQTYFSLINIKNAYEIYVEQETYNVRI), 183-216 (IQCHFVFGVNLMDERNFEQAARHFKLALNMAQAE), 223-256 (GRAYYNLGLCYYNQDLLDPAIDYFEKAVSTFESS), and 263-296 (PQAYFLITLIYYKQGKHDKASEYHKRGYEYAKET).

The protein belongs to the Rap family. In terms of assembly, homodimer. Interacts specifically with the C-terminal DNA-binding domain of ComA. Interacts with CSF.

Its subcellular location is the cytoplasm. Its activity is regulated as follows. Inhibited by the competence and sporulation stimulating factor (CSF), encoded by phrC, which prevents RapC-ComA interaction. Functionally, involved in the regulation of genetic competence development. Inhibits the activity of ComA, a transcriptional factor that regulates the development of genetic competence. Acts by binding to ComA, independently of its phosphorylation state, leading to the inhibition of ComA DNA-binding activity. Does not dephosphorylate phospho-ComA and does not affect the phosphorylation level of the ComP-ComA system. The sequence is that of Regulatory protein RapC (rapC) from Bacillus subtilis (strain 168).